Reading from the N-terminus, the 309-residue chain is Transcriptional regulator HilD (309 aa).

The region spanning 209–306 (ERVYNIISSS…KTTPSTFIKM (98 aa)) is the HTH araC/xylS-type domain. DNA-binding regions (H-T-H motif) lie at residues 226 to 247 (TDVA…AEEG) and 273 to 296 (VNAV…KKYF).

This is Transcriptional regulator HilD (hilD) from Salmonella typhimurium (strain SL1344).